The following is a 74-amino-acid chain: Small ribosomal subunit protein uS8c (74 aa).

The protein belongs to the universal ribosomal protein uS8 family. As to quaternary structure, part of the 30S ribosomal subunit.

The protein resides in the plastid. Its subcellular location is the chloroplast. In terms of biological role, one of the primary rRNA binding proteins, it binds directly to 16S rRNA central domain where it helps coordinate assembly of the platform of the 30S subunit. In Oenothera ammophila (Evening primerose), this protein is Small ribosomal subunit protein uS8c (rps8).